Here is a 182-residue protein sequence, read N- to C-terminus: Ribosome-recycling factor (182 aa).

This sequence belongs to the RRF family.

The protein resides in the cytoplasm. Its function is as follows. Responsible for the release of ribosomes from messenger RNA at the termination of protein biosynthesis. May increase the efficiency of translation by recycling ribosomes from one round of translation to another. The sequence is that of Ribosome-recycling factor from Prochlorococcus marinus (strain MIT 9313).